A 1202-amino-acid polypeptide reads, in one-letter code: Caskin-2 (1202 aa).

ANK repeat units lie at residues 48–77 (DGFS…TVDI), 81–110 (NGMR…AVNA), 114–143 (DGQI…NPCL), 147–176 (AKKT…CVAL), 188–217 (NYTT…EINR), and 220–249 (KTGT…DVNI). Tyr253 carries the phosphotyrosine modification. Residues 281–347 (SGILKVRALK…PPGIVEVVSK (67 aa)) form the SH3 domain. The interval 355–460 (RLPSAPTPLR…GLHPPSLADN (106 aa)) is disordered. Ser358, Ser393, Ser396, Ser403, Ser406, and Ser409 each carry phosphoserine. The segment covering 415–425 (SAGSGQSSEGT) has biased composition (polar residues). Position 471 is a phosphoserine (Ser471). 2 consecutive SAM domains span residues 489 to 552 (KDAQ…LSIA) and 558 to 622 (YIPT…LAEL). Disordered stretches follow at residues 676–1104 (LQAA…APKP) and 1116–1181 (GPKL…STKH). Ser725 carries the post-translational modification Phosphoserine. Residues 731–740 (NLPEGTERPP) show a composition bias toward basic and acidic residues. The span at 765-774 (SPAPGPPPGA) shows a compositional bias: pro residues. Phosphoserine is present on residues Ser858, Ser877, Ser878, and Ser892. Residues 913–923 (PSEPPGPPAPA) show a composition bias toward pro residues. The segment covering 940 to 949 (PPSRGSSGEG) has biased composition (low complexity). Pro residues-rich tracts occupy residues 966-978 (PAGP…PVPP) and 1018-1030 (PAAP…PGES). Over residues 1031-1051 (PPASSLPQPEPSSLPAQGVPT) the composition is skewed to low complexity. 2 stretches are compositionally biased toward pro residues: residues 1052–1068 (PLAP…PCPG) and 1124–1133 (GPRPVPPPRP). The segment covering 1135–1151 (STGTVGPGQAQQRLEQT) has biased composition (polar residues). The segment covering 1161–1172 (AAEKSIGTKEQE) has biased composition (basic and acidic residues).

In terms of assembly, may not bind CASK.

The protein localises to the cytoplasm. The protein is Caskin-2 (CASKIN2) of Homo sapiens (Human).